Reading from the N-terminus, the 335-residue chain is Thioredoxin-related transmembrane protein 4 (335 aa).

Residues 1 to 20 (MTGGFCVPVLLAAWLAAAAA) form the signal peptide. Residues 26–133 (AALPAEESRV…YEDLQNYILE (108 aa)) form the Thioredoxin domain. Active-site nucleophile residues include C60 and C63. Residues C60 and C63 are joined by a disulfide bond. Residues 186–206 (VFFVIATLVFGLFMGLILVVI) traverse the membrane as a helical segment. The interval 222 to 316 (CEQEQSTGEA…EDGAHPADTQ (95 aa)) is disordered. Acidic residues predominate over residues 238-280 (QDAEEEKDDSNEEENKDSLVDDEEEKEDIGDEDEGEEDEEEDN). A phosphoserine mark is found at S247 and S255. Over residues 286–298 (AEERSDTNERAVV) the composition is skewed to basic and acidic residues.

The protein localises to the nucleus inner membrane. It localises to the endoplasmic reticulum membrane. This chain is Thioredoxin-related transmembrane protein 4 (Tmx4), found in Mus musculus (Mouse).